Reading from the N-terminus, the 72-residue chain is MIIPWQDLDPETLDNLIESFVLREGTDYGEYERSLADKVADVKQQLKRGEAVLVWSELHETVNIMPRALFNG.

The protein belongs to the UPF0270 family.

The protein is UPF0270 protein KPN78578_37030 of Klebsiella pneumoniae subsp. pneumoniae (strain ATCC 700721 / MGH 78578).